The primary structure comprises 1375 residues: BNI1-related protein 1 (1375 aa).

Residues 94-490 (CMPQDASLVE…YLIDSFQVST (397 aa)) enclose the GBD/FH3 domain. A coiled-coil region spans residues 520–601 (QSDEIARRAV…ITTHQRLYDQ (82 aa)). Phosphoserine is present on Ser-621. The FH1 domain maps to 659-851 (SSYLTDANNE…LVTPPAPPLP (193 aa)). Positions 661 to 684 (YLTDANNENESQNESEDKSKDSLF) are disordered. Ser-751 carries the phosphoserine modification. Disordered stretches follow at residues 764–785 (KLPQLPPPPPPPPPPPLPQSLL), 817–839 (AVPPPPPPPPLPESLSMNKGPSN), and 1285–1309 (KSLLDMRTSSNKKSNGSDENDGEKV). Pro residues-rich tracts occupy residues 767–781 (QLPPPPPPPPPPPLP) and 818–828 (VPPPPPPPPLP). An FH2 domain is found at 868–1290 (DLKPPPTEKR…YEQRKSLLDM (423 aa)). The DAD domain occupies 1302-1336 (DENDGEKVNRDAVDLLISKLREVKKDPEPLRRRKS).

Belongs to the formin homology family. BNI1 subfamily. Interacts with profilin at the FH1 domain.

May organize microtubules by mediating spindle positioning and movement in the budding process. Potential target of the RHO family members. The protein is BNI1-related protein 1 (BNR1) of Saccharomyces cerevisiae (strain ATCC 204508 / S288c) (Baker's yeast).